The primary structure comprises 447 residues: MTPSLKRLSGAMRARPAPALSGTIKAPGDKSISHRAFILGGLAKGVTEVTGLLESDDVINSGRAAAALGAKVEHLGPGHWRIDGCGGQWTTPSAPLDFGNAGTGVRLMMGAVAGTGTSADFIGDESLSSRPMRRVTDPLGEMGARFTTTGGRLPAHLDGGPLAGIHYTPPIASAQVKSAVLLAALGATGTTVVHEPQITRDHTETMLRAFGVTLTVERDGAAATVTLTGPQTLIACPVDVPGDPSSSAFAIVAALISPGSDITLEGVMDNPARTGLIETLKEMGADITLTPGPDMAGEKTMHIHVKHSQLHGITVPATRAPSMIDEYPVLCVAAAYADGITHMPGLEELRAKESDRLAGSAAMLRANGVPVEEGEDSLAVTGMGIGGVPGGGRTVTHHDHRLAMSGLVIGLGAKAASSVDDIAMIATSYPDFFDHIATLGGRLEPLT.

The segment at 1–22 (MTPSLKRLSGAMRARPAPALSG) is disordered. Residues Lys-30, Ser-31, and Arg-35 each contribute to the 3-phosphoshikimate site. Position 30 (Lys-30) interacts with phosphoenolpyruvate. 2 residues coordinate phosphoenolpyruvate: Gly-102 and Arg-130. 3-phosphoshikimate is bound by residues Ser-173, Gln-175, Asp-325, and Lys-352. Gln-175 serves as a coordination point for phosphoenolpyruvate. Asp-325 (proton acceptor) is an active-site residue. Phosphoenolpyruvate is bound by residues Arg-356 and Arg-401.

The protein belongs to the EPSP synthase family. In terms of assembly, monomer.

Its subcellular location is the cytoplasm. It carries out the reaction 3-phosphoshikimate + phosphoenolpyruvate = 5-O-(1-carboxyvinyl)-3-phosphoshikimate + phosphate. The protein operates within metabolic intermediate biosynthesis; chorismate biosynthesis; chorismate from D-erythrose 4-phosphate and phosphoenolpyruvate: step 6/7. Catalyzes the transfer of the enolpyruvyl moiety of phosphoenolpyruvate (PEP) to the 5-hydroxyl of shikimate-3-phosphate (S3P) to produce enolpyruvyl shikimate-3-phosphate and inorganic phosphate. This Maricaulis maris (strain MCS10) (Caulobacter maris) protein is 3-phosphoshikimate 1-carboxyvinyltransferase.